The sequence spans 185 residues: Ribosome-recycling factor (185 aa).

This sequence belongs to the RRF family.

The protein resides in the cytoplasm. Its function is as follows. Responsible for the release of ribosomes from messenger RNA at the termination of protein biosynthesis. May increase the efficiency of translation by recycling ribosomes from one round of translation to another. The protein is Ribosome-recycling factor of Desulforapulum autotrophicum (strain ATCC 43914 / DSM 3382 / VKM B-1955 / HRM2) (Desulfobacterium autotrophicum).